The primary structure comprises 237 residues: Phosphoribosylaminoimidazole-succinocarboxamide synthase (237 aa).

The protein belongs to the SAICAR synthetase family.

The enzyme catalyses 5-amino-1-(5-phospho-D-ribosyl)imidazole-4-carboxylate + L-aspartate + ATP = (2S)-2-[5-amino-1-(5-phospho-beta-D-ribosyl)imidazole-4-carboxamido]succinate + ADP + phosphate + 2 H(+). Its pathway is purine metabolism; IMP biosynthesis via de novo pathway; 5-amino-1-(5-phospho-D-ribosyl)imidazole-4-carboxamide from 5-amino-1-(5-phospho-D-ribosyl)imidazole-4-carboxylate: step 1/2. The sequence is that of Phosphoribosylaminoimidazole-succinocarboxamide synthase from Listeria innocua serovar 6a (strain ATCC BAA-680 / CLIP 11262).